Reading from the N-terminus, the 592-residue chain is MKIENIEINIGIFGNVSVGKSSLVNCILGKKLSEIGYSKTTFVPQAYTNFGNREYHLESIRHLNEMANDQAKTINSTDKIKHVMHYIDKFSLLEDSRNGINDKIDSMFKIIIWDMPGFDTTHHGNMYLDWLSTNIKIFDIIVYVTEIMDDNLTMFDMLVSYVRKYDIKMICVVNKCDNMKLDKDSSVISLGTIDHDNRYIKINNTMANYATQYSIGNNNYITPFLPISVQNYEYFGNNLLLKNCDNDFGFEIFIASIINAINNHKLYFAVKHINRHIKVSKSKSMIDIIEYSRIVRKCNAQSRFIDISSGYNLSKYNLSENFWNLIRDTITSHASKIVQKCVKVVNDGKNIGFRSFDDVNIDIQVFLSFVNSVEIFKDFDDYPNDLVEYYRIKVISNLLNIYDVIADFEYTNQHYLDISNIFLYLELIKEHMRTEFDNYALKFIYTHRNIKTFESHYQESLINILKFIADNLSCCLSRNKFTSIVCMILINKQLYMKNKNNYLQYIISVKKLIKSVIKPTITINYIGPLDILIETTKKNVSIAISDNRLSSFYKQDINMFTVNNQLNNFYLGDTFDISVDFEKKLLELVKFE.

This is an uncharacterized protein from Acanthamoeba polyphaga mimivirus (APMV).